Consider the following 376-residue polypeptide: Queuine tRNA-ribosyltransferase (376 aa).

Aspartate 92 acts as the Proton acceptor in catalysis. Residues 92–96, aspartate 146, glutamine 190, and glycine 217 each bind substrate; that span reads DSGGF. Residues 248–254 are RNA binding; sequence GVGRPED. Aspartate 267 (nucleophile) is an active-site residue. The tract at residues 272–276 is RNA binding; important for wobble base 34 recognition; sequence TRNAR. Zn(2+)-binding residues include cysteine 305, cysteine 307, cysteine 310, and histidine 337.

It belongs to the queuine tRNA-ribosyltransferase family. In terms of assembly, homodimer. Within each dimer, one monomer is responsible for RNA recognition and catalysis, while the other monomer binds to the replacement base PreQ1. Zn(2+) is required as a cofactor.

The enzyme catalyses 7-aminomethyl-7-carbaguanine + guanosine(34) in tRNA = 7-aminomethyl-7-carbaguanosine(34) in tRNA + guanine. The protein operates within tRNA modification; tRNA-queuosine biosynthesis. Functionally, catalyzes the base-exchange of a guanine (G) residue with the queuine precursor 7-aminomethyl-7-deazaguanine (PreQ1) at position 34 (anticodon wobble position) in tRNAs with GU(N) anticodons (tRNA-Asp, -Asn, -His and -Tyr). Catalysis occurs through a double-displacement mechanism. The nucleophile active site attacks the C1' of nucleotide 34 to detach the guanine base from the RNA, forming a covalent enzyme-RNA intermediate. The proton acceptor active site deprotonates the incoming PreQ1, allowing a nucleophilic attack on the C1' of the ribose to form the product. After dissociation, two additional enzymatic reactions on the tRNA convert PreQ1 to queuine (Q), resulting in the hypermodified nucleoside queuosine (7-(((4,5-cis-dihydroxy-2-cyclopenten-1-yl)amino)methyl)-7-deazaguanosine). This chain is Queuine tRNA-ribosyltransferase, found in Stenotrophomonas maltophilia (strain R551-3).